The following is a 171-amino-acid chain: 3-hydroxydecanoyl-[acyl-carrier-protein] dehydratase (171 aa).

The active site involves H70.

Belongs to the thioester dehydratase family. FabA subfamily. In terms of assembly, homodimer.

It localises to the cytoplasm. It catalyses the reaction a (3R)-hydroxyacyl-[ACP] = a (2E)-enoyl-[ACP] + H2O. The catalysed reaction is (3R)-hydroxydecanoyl-[ACP] = (2E)-decenoyl-[ACP] + H2O. The enzyme catalyses (2E)-decenoyl-[ACP] = (3Z)-decenoyl-[ACP]. Its pathway is lipid metabolism; fatty acid biosynthesis. Its function is as follows. Necessary for the introduction of cis unsaturation into fatty acids. Catalyzes the dehydration of (3R)-3-hydroxydecanoyl-ACP to E-(2)-decenoyl-ACP and then its isomerization to Z-(3)-decenoyl-ACP. Can catalyze the dehydratase reaction for beta-hydroxyacyl-ACPs with saturated chain lengths up to 16:0, being most active on intermediate chain length. This Hydrogenovibrio crunogenus (strain DSM 25203 / XCL-2) (Thiomicrospira crunogena) protein is 3-hydroxydecanoyl-[acyl-carrier-protein] dehydratase.